We begin with the raw amino-acid sequence, 229 residues long: 2,3-bisphosphoglycerate-dependent phosphoglycerate mutase (229 aa).

Residues 8–15, 21–22, Arg60, 87–90, Lys98, 114–115, and 183–184 contribute to the substrate site; these read RHGESAWN, TG, ERHY, RR, and GN. His9 functions as the Tele-phosphohistidine intermediate in the catalytic mechanism. Glu87 (proton donor/acceptor) is an active-site residue.

The protein belongs to the phosphoglycerate mutase family. BPG-dependent PGAM subfamily. Homodimer.

The catalysed reaction is (2R)-2-phosphoglycerate = (2R)-3-phosphoglycerate. It functions in the pathway carbohydrate degradation; glycolysis; pyruvate from D-glyceraldehyde 3-phosphate: step 3/5. In terms of biological role, catalyzes the interconversion of 2-phosphoglycerate and 3-phosphoglycerate. The polypeptide is 2,3-bisphosphoglycerate-dependent phosphoglycerate mutase (Polynucleobacter asymbioticus (strain DSM 18221 / CIP 109841 / QLW-P1DMWA-1) (Polynucleobacter necessarius subsp. asymbioticus)).